The following is a 519-amino-acid chain: Cyclic AMP-responsive element-binding protein 3-like protein 1 (519 aa).

The required for transcriptional activation stretch occupies residues 1 to 60 (MDAVLEPFPADRLFPGSSFLDLGDLNESDFLNNAHFPEHLDHFTENMEDFSNDLFSSFFD). Over 1–374 (MDAVLEPFPA…YKMAATQTGT (374 aa)) the chain is Cytoplasmic. The tract at residues 71–98 (LDMELDSPTPGIQAEHSYSLSGDSAPQS) is disordered. A compositionally biased stretch (polar residues) spans 86-97 (HSYSLSGDSAPQ). Lysine 184 participates in a covalent cross-link: Glycyl lysine isopeptide (Lys-Gly) (interchain with G-Cter in SUMO2). The tract at residues 200-259 (DLVQMPPTPPSSHGSDSDGSQSPRSLPPSSPVRPMARSSTAISTSPLLTAPHKLQGTSGP) is disordered. The span at 210-223 (SSHGSDSDGSQSPR) shows a compositional bias: low complexity. Positions 236 to 246 (RSSTAISTSPL) are enriched in polar residues. The bZIP domain maps to 290–353 (ALKRVRRKIK…RTLLQQLQKL (64 aa)). Positions 292 to 321 (KRVRRKIKNKISAQESRRKKKEYVECLEKK) are basic motif. The segment at 332–353 (LWKKVETLENANRTLLQQLQKL) is leucine-zipper. Residues 375–395 (CLMVAALCFVLVLGSLVPCLP) form a helical; Signal-anchor for type II membrane protein membrane-spanning segment. The MBTPS2 recognition signature appears at 392–395 (PCLP). The Lumenal segment spans residues 396–519 (EFSSGSQTVK…LGPNTTIKLS (124 aa)). The MBTPS1 recognition signature appears at 423–426 (RSLL). Positions 484-519 (EAWPKDGGNGTSPDFSHSKEWFHDRDLGPNTTIKLS) are disordered. N-linked (GlcNAc...) asparagine glycosylation is present at asparagine 492. Over residues 499-510 (SHSKEWFHDRDL) the composition is skewed to basic and acidic residues. The N-linked (GlcNAc...) asparagine glycan is linked to asparagine 513.

The protein belongs to the bZIP family. ATF subfamily. As to quaternary structure, interacts with SMAD4, the interaction takes place upon TGFB1 induction and SMAD4 acts as a CREB3L1 coactivator to induce the expression of genes involved in assembly of collagen extracellular matrix. In terms of processing, upon ER stress or DNA damage, translocated to the Golgi apparatus, where it is processed by regulated intramembrane proteolysis (RIP) to release the cytosol-facing N-terminal transcription factor domain. The cleavage is performed sequentially by site-1 and site-2 proteases (S1P/MBTPS1 and S2P/MBTPS2). RIP is induced by TGFB1 and ceramide. N-glycosylated. Post-translationally, ubiquitinated by HRD1/SYVN1; undergoes 'Lys-48'-linked ubiquitination, followed by rapid proteasomal degradation under normal conditions. Upon ER stress, SYVN1 E3 ubiquitin-protein ligase dissociates from its substrate, ubiquitination does not occur and CREB3L1 is stabilized. Expressed in several tissues, with highest levels in pancreas and prostate. Expressed at relatively lower levels in brain.

The protein resides in the endoplasmic reticulum membrane. The protein localises to the nucleus. Precursor of the transcription factor form (Processed cyclic AMP-responsive element-binding protein 3-like protein 1), which is embedded in the endoplasmic reticulum membrane with N-terminal DNA-binding and transcription activation domains oriented toward the cytosolic face of the membrane. In response to ER stress or DNA damage, transported to the Golgi, where it is cleaved in a site-specific manner by resident proteases S1P/MBTPS1 and S2P/MBTPS2. The released N-terminal cytosolic domain is translocated to the nucleus where it activates transcription of specific target genes involved in the cell-cycle progression inhibition. In terms of biological role, transcription factor involved in cell type specific DNA damage and unfolded protein response (UPR). Binds the DNA consensus sequence 5'-GTGXGCXGC-3'. Plays a critical role in bone formation through the transcription of COL1A1, and possibly COL1A2, and the secretion of bone matrix proteins. Directly binds to the UPR element (UPRE)-like sequence in an osteoblast-specific COL1A1 promoter region and induces its transcription. Does not regulate COL1A1 in other tissues, such as skin. Required to protect astrocytes from ER stress-induced cell death. In astrocytes, binds to the cAMP response element (CRE) of the BiP/HSPA5 promoter and participate in its transcriptional activation. In astrocytes and osteoblasts, upon DNA damage, inhibits cell-cycle progression after G2/M phase by binding to promoters and activating transcription of genes encoding cell-cycle inhibitors, such as p21/CDKN1A. Required for TGFB1 to activate genes involved in the assembly of collagen extracellular matrix. Functionally, (Microbial infection) May play a role in limiting virus spread by inhibiting proliferation of virus-infected cells. Upon infection with diverse DNA and RNA viruses, inhibits cell-cycle progression by binding to promoters and activating transcription of genes encoding cell-cycle inhibitors, such as p21/CDKN1A. The sequence is that of Cyclic AMP-responsive element-binding protein 3-like protein 1 from Homo sapiens (Human).